A 233-amino-acid polypeptide reads, in one-letter code: Auxin-responsive protein IAA11 (233 aa).

2 disordered regions span residues methionine 1 to glycine 27 and proline 46 to glutamine 100. The short motif at leucine 11–leucine 15 is the EAR-like (transcriptional repression) element. Residues glycine 54–aspartate 63 show a composition bias toward acidic residues. The PB1 domain occupies alanine 122–glycine 217.

The protein belongs to the Aux/IAA family. Homodimers and heterodimers. As to expression, highly expressed in etiolated shoots. Expressed in roots.

It localises to the nucleus. Aux/IAA proteins are short-lived transcriptional factors that function as repressors of early auxin response genes at low auxin concentrations. This Oryza sativa subsp. japonica (Rice) protein is Auxin-responsive protein IAA11 (IAA11).